A 321-amino-acid chain; its full sequence is Citrate synthase (321 aa).

Residues His-248 and Asp-306 contribute to the active site.

This sequence belongs to the citrate synthase family.

The catalysed reaction is oxaloacetate + acetyl-CoA + H2O = citrate + CoA + H(+). The protein operates within carbohydrate metabolism; tricarboxylic acid cycle; isocitrate from oxaloacetate: step 1/2. This chain is Citrate synthase (gltA), found in Bartonella bacilliformis.